Here is a 69-residue protein sequence, read N- to C-terminus: MSRLCIFLIQIYRKYISPLKRPSCRFHPTCSAYSMAAYERYGFFKGTYLTLKRILKCHPFHPGGYDPLR.

Belongs to the UPF0161 family.

It localises to the cell membrane. Its function is as follows. Could be involved in insertion of integral membrane proteins into the membrane. In Alkaliphilus oremlandii (strain OhILAs) (Clostridium oremlandii (strain OhILAs)), this protein is Putative membrane protein insertion efficiency factor.